Consider the following 144-residue polypeptide: Methylglyoxal synthase (144 aa).

One can recognise an MGS-like domain in the interval 1–144; the sequence is MKIALIAHDE…KSGEEKETER (144 aa). Substrate is bound by residues H8, K12, 34 to 37, and 54 to 55; these read TGTT and SG. D60 serves as the catalytic Proton donor/acceptor. Residue H87 coordinates substrate.

The protein belongs to the methylglyoxal synthase family.

It carries out the reaction dihydroxyacetone phosphate = methylglyoxal + phosphate. Catalyzes the formation of methylglyoxal from dihydroxyacetone phosphate. This chain is Methylglyoxal synthase, found in Geobacillus thermodenitrificans (strain NG80-2).